Consider the following 388-residue polypeptide: UPF0496 protein 1 (388 aa).

The segment at 1 to 25 (MGNSSSSGSHRPPRPASSESALPPA) is disordered. Residues 198-227 (QAVYRQQLTMLEKLQQRKHRLDKKVRAIKA) are a coiled coil. Helical transmembrane passes span 234-254 (IIFATTFAAVLICSVVAAAIA) and 257-277 (PVAAALAAAASIPVGSMGKWI). The stretch at 344–376 (VEEIKKKLEVFMKSVEDLGEQADRCSRDIRRAR) forms a coiled coil.

This sequence belongs to the UPF0496 family.

It localises to the membrane. The protein is UPF0496 protein 1 of Oryza sativa subsp. japonica (Rice).